A 239-amino-acid chain; its full sequence is Purine nucleoside phosphorylase DeoD-type (239 aa).

Residue His5 coordinates a purine D-ribonucleoside. Phosphate is bound by residues Gly21, Arg25, Arg44, and 88–91 (RVGS). Residues 180–182 (EME) and 204–205 (SD) contribute to the a purine D-ribonucleoside site. The active-site Proton donor is Asp205.

The protein belongs to the PNP/UDP phosphorylase family. In terms of assembly, homohexamer; trimer of homodimers.

It catalyses the reaction a purine D-ribonucleoside + phosphate = a purine nucleobase + alpha-D-ribose 1-phosphate. It carries out the reaction a purine 2'-deoxy-D-ribonucleoside + phosphate = a purine nucleobase + 2-deoxy-alpha-D-ribose 1-phosphate. Catalyzes the reversible phosphorolytic breakdown of the N-glycosidic bond in the beta-(deoxy)ribonucleoside molecules, with the formation of the corresponding free purine bases and pentose-1-phosphate. The chain is Purine nucleoside phosphorylase DeoD-type from Myxococcus xanthus (strain DK1622).